Here is a 347-residue protein sequence, read N- to C-terminus: N-acetyl-gamma-glutamyl-phosphate reductase (347 aa).

Cys151 is an active-site residue.

The protein belongs to the NAGSA dehydrogenase family. Type 1 subfamily.

The protein resides in the cytoplasm. It carries out the reaction N-acetyl-L-glutamate 5-semialdehyde + phosphate + NADP(+) = N-acetyl-L-glutamyl 5-phosphate + NADPH + H(+). It participates in amino-acid biosynthesis; L-arginine biosynthesis; N(2)-acetyl-L-ornithine from L-glutamate: step 3/4. In terms of biological role, catalyzes the NADPH-dependent reduction of N-acetyl-5-glutamyl phosphate to yield N-acetyl-L-glutamate 5-semialdehyde. The chain is N-acetyl-gamma-glutamyl-phosphate reductase from Corynebacterium aurimucosum (strain ATCC 700975 / DSM 44827 / CIP 107346 / CN-1) (Corynebacterium nigricans).